The sequence spans 560 residues: DNA ligase B (560 aa).

The active-site N6-AMP-lysine intermediate is the Lys-124.

The protein belongs to the NAD-dependent DNA ligase family. LigB subfamily.

The catalysed reaction is NAD(+) + (deoxyribonucleotide)n-3'-hydroxyl + 5'-phospho-(deoxyribonucleotide)m = (deoxyribonucleotide)n+m + AMP + beta-nicotinamide D-nucleotide.. Functionally, catalyzes the formation of phosphodiester linkages between 5'-phosphoryl and 3'-hydroxyl groups in double-stranded DNA using NAD as a coenzyme and as the energy source for the reaction. This Escherichia coli (strain K12 / DH10B) protein is DNA ligase B.